The sequence spans 224 residues: UPF0758 protein lin1584 (224 aa).

One can recognise an MPN domain in the interval 102–224 (VIRCPEDAVK…YISLKEKGYF (123 aa)). Zn(2+) contacts are provided by His173, His175, and Asp186. A JAMM motif motif is present at residues 173 to 186 (HNHPSGDPAPSSED).

The protein belongs to the UPF0758 family.

The chain is UPF0758 protein lin1584 from Listeria innocua serovar 6a (strain ATCC BAA-680 / CLIP 11262).